The primary structure comprises 116 residues: Phosphoribosyl-ATP pyrophosphatase (116 aa).

It belongs to the PRA-PH family.

It localises to the cytoplasm. The enzyme catalyses 1-(5-phospho-beta-D-ribosyl)-ATP + H2O = 1-(5-phospho-beta-D-ribosyl)-5'-AMP + diphosphate + H(+). The protein operates within amino-acid biosynthesis; L-histidine biosynthesis; L-histidine from 5-phospho-alpha-D-ribose 1-diphosphate: step 2/9. The protein is Phosphoribosyl-ATP pyrophosphatase of Nitrobacter winogradskyi (strain ATCC 25391 / DSM 10237 / CIP 104748 / NCIMB 11846 / Nb-255).